A 176-amino-acid polypeptide reads, in one-letter code: Peptidyl-tRNA hydrolase (176 aa).

Y14 provides a ligand contact to tRNA. H19 serves as the catalytic Proton acceptor. Y65, N67, and N113 together coordinate tRNA.

The protein belongs to the PTH family. Monomer.

The protein localises to the cytoplasm. It carries out the reaction an N-acyl-L-alpha-aminoacyl-tRNA + H2O = an N-acyl-L-amino acid + a tRNA + H(+). Functionally, hydrolyzes ribosome-free peptidyl-tRNAs (with 1 or more amino acids incorporated), which drop off the ribosome during protein synthesis, or as a result of ribosome stalling. Its function is as follows. Catalyzes the release of premature peptidyl moieties from peptidyl-tRNA molecules trapped in stalled 50S ribosomal subunits, and thus maintains levels of free tRNAs and 50S ribosomes. This Phytoplasma mali (strain AT) protein is Peptidyl-tRNA hydrolase.